Here is a 159-residue protein sequence, read N- to C-terminus: Large ribosomal subunit protein uL15 (159 aa).

Over residues 1–13 (MRIHEVTPKEGST) the composition is skewed to basic and acidic residues. The segment at 1–51 (MRIHEVTPKEGSTKRRRRVGRGISAGQGASCGFGMRGQKSRSGTGTKAGFE) is disordered. Gly residues predominate over residues 23–35 (ISAGQGASCGFGM).

This sequence belongs to the universal ribosomal protein uL15 family. In terms of assembly, part of the 50S ribosomal subunit.

Its function is as follows. Binds to the 23S rRNA. This is Large ribosomal subunit protein uL15 from Rippkaea orientalis (strain PCC 8801 / RF-1) (Cyanothece sp. (strain PCC 8801)).